A 122-amino-acid chain; its full sequence is Large ribosomal subunit protein uL18 (122 aa).

It belongs to the universal ribosomal protein uL18 family. Part of the 50S ribosomal subunit; part of the 5S rRNA/L5/L18/L25 subcomplex. Contacts the 5S and 23S rRNAs.

In terms of biological role, this is one of the proteins that bind and probably mediate the attachment of the 5S RNA into the large ribosomal subunit, where it forms part of the central protuberance. The protein is Large ribosomal subunit protein uL18 of Buchnera aphidicola subsp. Acyrthosiphon pisum (strain 5A).